A 188-amino-acid polypeptide reads, in one-letter code: MDRLKQSLLDAPIIEKDGYHYFVHPISDGVPMLEPELLREIVIRIIRKAELDEVDKIVTPAAMGIHISTAVSLMTDIPIVVIRKREYGLPGEVALSQETGYSENEMYINDVHEGDRVLVLDDVLSTGGTLRAITDALEQTGADVADVLAVIKKAGPNELDDTDMDVRTLINVDVADGEVVVVDDQGDH.

Belongs to the purine/pyrimidine phosphoribosyltransferase family. Archaeal HPRT subfamily.

Its function is as follows. May catalyze a purine salvage reaction, the substrate is unknown. The chain is HGPRTase-like protein from Halobacterium salinarum (strain ATCC 29341 / DSM 671 / R1).